Reading from the N-terminus, the 80-residue chain is Metallothionein-like protein type 2 MET1 (80 aa).

It belongs to the metallothionein superfamily. Type 15 family.

Its function is as follows. Metallothioneins have a high content of cysteine residues that bind various heavy metals. The polypeptide is Metallothionein-like protein type 2 MET1 (MET1) (Fragaria ananassa (Strawberry)).